A 169-amino-acid polypeptide reads, in one-letter code: Endoribonuclease YbeY (169 aa).

Zn(2+) is bound by residues H117, H121, and H127.

This sequence belongs to the endoribonuclease YbeY family. Zn(2+) serves as cofactor.

Its subcellular location is the cytoplasm. In terms of biological role, single strand-specific metallo-endoribonuclease involved in late-stage 70S ribosome quality control and in maturation of the 3' terminus of the 16S rRNA. In Mesoplasma florum (strain ATCC 33453 / NBRC 100688 / NCTC 11704 / L1) (Acholeplasma florum), this protein is Endoribonuclease YbeY.